The chain runs to 342 residues: Probable endoglucanase (342 aa).

The N-terminal stretch at 1-20 (MSVMAAMGGAQVLSSTGAFA) is a signal peptide. Glu57 acts as the Proton donor in catalysis. Asp114 (nucleophile) is an active-site residue.

The protein belongs to the glycosyl hydrolase 8 (cellulase D) family.

It localises to the secreted. It carries out the reaction Endohydrolysis of (1-&gt;4)-beta-D-glucosidic linkages in cellulose, lichenin and cereal beta-D-glucans.. In terms of biological role, enzyme capable of hydrolyzing carboxy-methyl-cellulose (CMC). This Novacetimonas hansenii (Komagataeibacter hansenii) protein is Probable endoglucanase (cmcAX).